Here is a 115-residue protein sequence, read N- to C-terminus: MLSRKATAVLLAVHAAAMLASQTEAFVPIFTYGEVRRMQEKERYKGQKKSLSVQQRSEEVGPVDPTEPWEEKQEVIKLTAPVEIGMRMNSRQLEKYQATLEGLLREVLPPSRNAQ.

Residues 1 to 25 (MLSRKATAVLLAVHAAAMLASQTEA) form the signal peptide. The segment at 43 to 72 (RYKGQKKSLSVQQRSEEVGPVDPTEPWEEK) is disordered.

The protein belongs to the motilin family.

It is found in the secreted. Plays an important role in the regulation of interdigestive gastrointestinal motility and indirectly causes rhythmic contraction of duodenal and colonic smooth muscle. The sequence is that of Promotilin (MLN) from Bos taurus (Bovine).